The sequence spans 134 residues: Profilin-4 (134 aa).

A disulfide bridge connects residues C13 and C118. The short motif at 84–100 (AVIRGKKGSGGITIKKT) is the Involved in PIP2 interaction element. T114 is subject to Phosphothreonine.

This sequence belongs to the profilin family. In terms of assembly, occurs in many kinds of cells as a complex with monomeric actin in a 1:1 ratio. In terms of processing, phosphorylated by MAP kinases.

It is found in the cytoplasm. The protein resides in the cytoskeleton. In terms of biological role, binds to actin and affects the structure of the cytoskeleton. At high concentrations, profilin prevents the polymerization of actin, whereas it enhances it at low concentrations. This chain is Profilin-4, found in Olea europaea (Common olive).